Here is a 164-residue protein sequence, read N- to C-terminus: Large ribosomal subunit protein uL10 (164 aa).

It belongs to the universal ribosomal protein uL10 family. Part of the ribosomal stalk of the 50S ribosomal subunit. The N-terminus interacts with L11 and the large rRNA to form the base of the stalk. The C-terminus forms an elongated spine to which L12 dimers bind in a sequential fashion forming a multimeric L10(L12)X complex.

Forms part of the ribosomal stalk, playing a central role in the interaction of the ribosome with GTP-bound translation factors. The polypeptide is Large ribosomal subunit protein uL10 (Chromobacterium violaceum (strain ATCC 12472 / DSM 30191 / JCM 1249 / CCUG 213 / NBRC 12614 / NCIMB 9131 / NCTC 9757 / MK)).